Here is a 177-residue protein sequence, read N- to C-terminus: ATP synthase subunit delta (177 aa).

This sequence belongs to the ATPase delta chain family. F-type ATPases have 2 components, F(1) - the catalytic core - and F(0) - the membrane proton channel. F(1) has five subunits: alpha(3), beta(3), gamma(1), delta(1), epsilon(1). F(0) has three main subunits: a(1), b(2) and c(10-14). The alpha and beta chains form an alternating ring which encloses part of the gamma chain. F(1) is attached to F(0) by a central stalk formed by the gamma and epsilon chains, while a peripheral stalk is formed by the delta and b chains.

It localises to the cell membrane. F(1)F(0) ATP synthase produces ATP from ADP in the presence of a proton or sodium gradient. F-type ATPases consist of two structural domains, F(1) containing the extramembraneous catalytic core and F(0) containing the membrane proton channel, linked together by a central stalk and a peripheral stalk. During catalysis, ATP synthesis in the catalytic domain of F(1) is coupled via a rotary mechanism of the central stalk subunits to proton translocation. Functionally, this protein is part of the stalk that links CF(0) to CF(1). It either transmits conformational changes from CF(0) to CF(1) or is implicated in proton conduction. The polypeptide is ATP synthase subunit delta (Carboxydothermus hydrogenoformans (strain ATCC BAA-161 / DSM 6008 / Z-2901)).